A 754-amino-acid chain; its full sequence is Pentatricopeptide repeat-containing protein At3g53700, chloroplastic (754 aa).

A chloroplast-targeting transit peptide spans 1-72 (MAFSSCLKFY…DSAALRLFNL (72 aa)). 17 PPR repeats span residues 82 to 116 (EPALYEEILLRLGRSGSFDDMKKILEDMKSSRCEM), 117 to 152 (GTSTFLILIESYAQFELQDEILSVVDWMIDEFGLKP), 153 to 187 (DTHFYNRMLNLLVDGNSLKLVEISHAKMSVWGIKP), 188 to 222 (DVSTFNVLIKALCRAHQLRPAILMLEDMPSYGLVP), 223 to 257 (DEKTFTTVMQGYIEEGDLDGALRIREQMVEFGCSW), 258 to 288 (SNVSVNVIVHGFCKEGRVEDALNFIQEMSNQ), 294 to 328 (DQYTFNTLVNGLCKAGHVKHAIEIMDVMLQEGYDP), 329 to 363 (DVYTYNSVISGLCKLGEVKEAVEVLDQMITRDCSP), 364 to 398 (NTVTYNTLISTLCKENQVEEATELARVLTSKGILP), 399 to 433 (DVCTFNSLIQGLCLTRNHRVAMELFEEMRSKGCEP), 434 to 468 (DEFTYNMLIDSLCSKGKLDEALNMLKQMELSGCAR), 469 to 503 (SVITYNTLIDGFCKANKTREAEEIFDEMEVHGVSR), 504 to 538 (NSVTYNTLIDGLCKSRRVEDAAQLMDQMIMEGQKP), 539 to 573 (DKYTYNSLLTHFCRGGDIKKAADIVQAMTSNGCEP), 574 to 608 (DIVTYGTLISGLCKAGRVEVASKLLRSIQMKGINL), 609 to 643 (TPHAYNPVIQGLFRKRKTTEAINLFREMLEQNEAP), and 645 to 680 (DAVSYRIVFRGLCNGGGPIREAVDFLVELLEKGFVP).

The protein belongs to the PPR family. P subfamily.

It localises to the plastid. Its subcellular location is the chloroplast. May be involved in female gametophyte development. This is Pentatricopeptide repeat-containing protein At3g53700, chloroplastic (MEE40) from Arabidopsis thaliana (Mouse-ear cress).